Reading from the N-terminus, the 917-residue chain is Autophagy-related protein 9 (917 aa).

Over 1–226 the chain is Cytoplasmic; sequence MASNIFSRLV…AGFWCIIVQR (226 aa). Disordered regions lie at residues 16 to 37 and 119 to 177; these read RSFYEDLRQTDPDADLESRAGI and LLLS…QGRP. Residues 227–247 form a helical membrane-spanning segment; the sequence is ILELVNAAFVAVFLTFLSQCV. Topologically, residues 248 to 275 are lumenal; it reads DYHKLPHSKKMEDIIIPKCTQNMSLVWN. An N-linked (GlcNAc...) asparagine glycan is attached at Asn269. Residues 276–296 traverse the membrane as a helical segment; sequence VGLWLFAIYFICRCFGLIIQL. The Cytoplasmic portion of the chain corresponds to 297–442; that stretch reads RQLKHLRDFY…RQLSQKLKSR (146 aa). Residues 443-463 lie within the membrane without spanning it; the sequence is FFFAGLMIFVMSPFIALYLIL. Topologically, residues 464 to 539 are cytoplasmic; sequence VYFLTYFHEF…ARTVSFITGS (76 aa). Residues 540–560 traverse the membrane as a helical segment; that stretch reads IVAVLGLATIFDSEAFLTFEI. At 561–564 the chain is on the lumenal side; sequence TPDR. The chain crosses the membrane as a helical span at residues 565-585; sequence SVLFYVSILATLWAVARGNIS. The Cytoplasmic portion of the chain corresponds to 586–633; the sequence is DDNEVYDPEFAMKSIIEFTHYEPDHWRGRLHSTEVKNEFSELYKPRPQ. Lys621 carries the N6-acetyllysine modification. The stretch at 634–654 is an intramembrane region; that stretch reads IFLEEILSILLTPLVLLVSLP. The Cytoplasmic segment spans residues 655 to 917; it reads NSTDQIVDFF…FQQAHMHLRR (263 aa). The tract at residues 854-895 is disordered; sequence DARFGKLGDEDIDESGGALDESTWQTSPTKTLSRENSGANPQ. Over residues 875 to 895 the composition is skewed to polar residues; that stretch reads STWQTSPTKTLSRENSGANPQ.

It belongs to the ATG9 family. In terms of assembly, homotrimer; forms a homotrimer with a central pore that forms a path between the two membrane leaflets. Interacts with HAT1. Acetylated by HAT1 at Lys-621, which increases the ability to bind vesicles during nutrient starvation induction. Post-translationally, phosphorylated by ATG1. ATG1 phosphorylation is required for preautophagosome elongation.

It localises to the preautophagosomal structure membrane. Its subcellular location is the cytoplasmic vesicle membrane. The protein localises to the vacuole membrane. The protein resides in the golgi apparatus membrane. It is found in the endoplasmic reticulum membrane. The catalysed reaction is a 1,2-diacyl-sn-glycero-3-phosphocholine(in) = a 1,2-diacyl-sn-glycero-3-phosphocholine(out). It carries out the reaction a 1,2-diacyl-sn-glycero-3-phospho-L-serine(in) = a 1,2-diacyl-sn-glycero-3-phospho-L-serine(out). The enzyme catalyses a 1,2-diacyl-sn-glycero-3-phosphoethanolamine(in) = a 1,2-diacyl-sn-glycero-3-phosphoethanolamine(out). It catalyses the reaction a 1,2-diacyl-sn-glycero-3-phospho-(1D-myo-inositol-3-phosphate)(in) = a 1,2-diacyl-sn-glycero-3-phospho-(1D-myo-inositol-3-phosphate)(out). Phospholipid scramblase involved in autophagy and cytoplasm to vacuole transport (Cvt) vesicle formation. Cycles between the preautophagosomal structure/phagophore assembly site (PAS) and the cytoplasmic vesicle pool and supplies membrane for the growing autophagosome. Lipid scramblase activity plays a key role in preautophagosomal structure/phagophore assembly by distributing the phospholipids that arrive through ATG2 from the cytoplasmic to the luminal leaflet of the bilayer, thereby driving autophagosomal membrane expansion. Required for mitophagy. Also involved in endoplasmic reticulum-specific autophagic process and is essential for the survival of cells subjected to severe ER stress. Different machineries are required for anterograde trafficking to the PAS during either the Cvt pathway or bulk autophagy and for retrograde trafficking. Plays a role in appressorium formation and pathogenicity. The protein is Autophagy-related protein 9 of Pyricularia oryzae (strain 70-15 / ATCC MYA-4617 / FGSC 8958) (Rice blast fungus).